The chain runs to 566 residues: MALTCTDMSDAVAGSDAEGLTADAIVVGAGLAGLVAACELADRGLRVLILDQENRANVGGQAFWSFGGLFLVNSPEQRRLGIRDSHELALQDWLGTAAFDRPEDYWPEQWAHAYVDFAAGEKRSWLRARGLKIFPLVGWAERGGYDAQGHGNSVPRFHITWGTGPALVDIFVRQLRDRPTVRFAHRHQVDKLIVEGNAVTGVRGTVLEPSDEPRGAPSSRKSVGKFEFRASAVIVASGGIGGNHELVRKNWPRRMGRIPKQLLSGVPAHVDGRMIGIAQKAGAAVINPDRMWHYTEGITNYDPIWPRHGIRIIPGPSSLWLDAAGKRLPVPLFPGFDTLGTLEYITKSGHDYTWFVLNAKIIEKEFALSGQEQNPDLTGRRLGQLLRSRAHAGPPGPVQAFIDRGVDFVHANSLRELVAAMNELPDVVPLDYETVAAAVTARDREVVNKYSKDGQITAIRAARRYRGDRFGRVVAPHRLTDPKAGPLIAVKLHILTRKTLGGIETDLDARVLKADGTPLAGLYAAGEVAGFGGGGVHGYRALEGTFLGGCIFSGRAAGRGAAEDIR.

23-54 provides a ligand contact to FAD; sequence DAIVVGAGLAGLVAACELADRGLRVLILDQEN.

It belongs to the FAD-dependent oxidoreductase 2 family. It depends on FAD as a cofactor.

It functions in the pathway lipid metabolism; steroid biosynthesis. Able to catalyze the elimination of the C-1 and C-2 hydrogen atoms of the A-ring from the polycyclic ring structure of 3-ketosteroids. In Mycobacterium tuberculosis (strain CDC 1551 / Oshkosh), this protein is KsdD-like steroid dehydrogenase MT0809.